We begin with the raw amino-acid sequence, 213 residues long: Urease accessory protein UreG (213 aa).

Residue 12-19 coordinates GTP; the sequence is GPVGSGKT.

It belongs to the SIMIBI class G3E GTPase family. UreG subfamily. As to quaternary structure, homodimer. UreD, UreF and UreG form a complex that acts as a GTP-hydrolysis-dependent molecular chaperone, activating the urease apoprotein by helping to assemble the nickel containing metallocenter of UreC. The UreE protein probably delivers the nickel.

It localises to the cytoplasm. Functionally, facilitates the functional incorporation of the urease nickel metallocenter. This process requires GTP hydrolysis, probably effectuated by UreG. The sequence is that of Urease accessory protein UreG from Marinomonas sp. (strain MWYL1).